Reading from the N-terminus, the 85-residue chain is 4-hydroxyphenylacetate decarboxylase small subunit (85 aa).

[4Fe-4S] cluster contacts are provided by His4, Cys7, Cys20, Cys34, Cys43, Cys46, Cys60, and Cys78.

This sequence belongs to the HPA decarboxylase small subunit family. As to quaternary structure, heterooctamer consisting of 4 large (HpdB) subunits and 4 small (HpdC) subunits, arranged as a tetramer of heterodimers. [4Fe-4S] cluster serves as cofactor.

The catalysed reaction is 4-hydroxyphenylacetate + H(+) = 4-methylphenol + CO2. It carries out the reaction 3,4-dihydroxyphenylacetate + H(+) = 4-methylcatechol + CO2. Functionally, component of the HPA decarboxylase that decarboxylates phenylacetates with a hydroxyl group in the p-position. Active toward 4-hydroxyphenylacetate and 3,4-dihydroxyphenylacetate, forming 4-methylphenol and 4-methylcatechol, respectively. Is likely involved in the catabolism of aromatic amino acids such as tyrosine fermentation. 4-methylphenol (p-cresol) formation provides metabolic toxicity, which allows an active suppression of other microbes and may provide growth advantages for the producers in highly competitive environments. The small subunit is essential for enzymatic activity of HPA decarboxylase, and also seems to be involved in the regulation of the enzyme oligomeric state and catalytic activity. The chain is 4-hydroxyphenylacetate decarboxylase small subunit from Clostridioides difficile (strain CD196) (Peptoclostridium difficile).